The primary structure comprises 231 residues: LexA repressor (231 aa).

Positions 31–51 form a DNA-binding region, H-T-H motif; sequence RAEIATEFGFRSANAAEEHLQ. Residues serine 148 and lysine 185 each act as for autocatalytic cleavage activity in the active site.

It belongs to the peptidase S24 family. Homodimer.

The catalysed reaction is Hydrolysis of Ala-|-Gly bond in repressor LexA.. In terms of biological role, represses a number of genes involved in the response to DNA damage (SOS response), including recA and lexA. In the presence of single-stranded DNA, RecA interacts with LexA causing an autocatalytic cleavage which disrupts the DNA-binding part of LexA, leading to derepression of the SOS regulon and eventually DNA repair. This chain is LexA repressor, found in Leptothrix cholodnii (strain ATCC 51168 / LMG 8142 / SP-6) (Leptothrix discophora (strain SP-6)).